Here is a 253-residue protein sequence, read N- to C-terminus: Phosphoglycerate mutase 2 (253 aa).

Threonine 3 is subject to Phosphothreonine. Substrate is bound by residues arginine 10–asparagine 17, cysteine 23–glycine 24, arginine 62, glutamate 89–tyrosine 92, lysine 100, and arginine 116–arginine 117. Catalysis depends on histidine 11, which acts as the Tele-phosphohistidine intermediate. Residue serine 14 is modified to Phosphoserine. Glutamate 89 acts as the Proton donor/acceptor in catalysis. Serine 118 bears the Phosphoserine mark. Residue threonine 121 is modified to Phosphothreonine. Tyrosine 132 and tyrosine 133 each carry phosphotyrosine. Phosphoserine is present on serine 135. Phosphothreonine is present on threonine 152. Glycine 187–asparagine 188 contacts substrate.

This sequence belongs to the phosphoglycerate mutase family. BPG-dependent PGAM subfamily. Homodimer. Interacts with ENO1. In terms of tissue distribution, expressed in the testes (at protein level).

It catalyses the reaction (2R)-2-phosphoglycerate = (2R)-3-phosphoglycerate. The catalysed reaction is (2R)-3-phospho-glyceroyl phosphate = (2R)-2,3-bisphosphoglycerate + H(+). Interconversion of 3- and 2-phosphoglycerate with 2,3-bisphosphoglycerate as the primer of the reaction. Can also catalyze the reaction of EC 5.4.2.4 (synthase), but with a reduced activity. This is Phosphoglycerate mutase 2 (Pgam2) from Mus musculus (Mouse).